Here is a 339-residue protein sequence, read N- to C-terminus: MPSPLILCRYLPRELSPTVDSRSCSSPLVASRAGKFLGATPPRAPRLSRRLAWCFIDWGQVCLLHRLGSGGFGSVYKATYHGVPVAIKQVNKCTRTLRASQRNFWAELNIARLHHDNIIRVVAASTRTPEGSNSLGTIIMEFGGNVTLHQVIYGATRSPEPLSCREQLSLGKCLKYSLDIVNGLLFLHSQSILHLDLKPANILISEKDVCKISDFGCSQKLQDLRCRPSLHHIGGTYTHQAPELLKGEIATPKADIYSFGITLWQMTTREVPYSGEPQYVQYAVVAYNLRPHWQAVFTASLTGKTLQNNVQSCWEARALQRPGAELLQKDLKAFRGALG.

The Protein kinase domain maps to 61-335 (VCLLHRLGSG…LLQKDLKAFR (275 aa)). Residues 67–75 (LGSGGFGSV) and K88 contribute to the ATP site. D196 acts as the Proton acceptor in catalysis.

This sequence belongs to the protein kinase superfamily. Ser/Thr protein kinase family. Interacts with MAP2K1/MEK1. In terms of tissue distribution, expressed mainly in gonadal tissues, and cardiac and skeletal muscles.

Its subcellular location is the cytoplasm. The enzyme catalyses L-seryl-[protein] + ATP = O-phospho-L-seryl-[protein] + ADP + H(+). It catalyses the reaction L-threonyl-[protein] + ATP = O-phospho-L-threonyl-[protein] + ADP + H(+). Its function is as follows. Serine/threonine kinase involved in the regulation of MAPK signaling. Is an activator of the ERK1/2 signaling cascade playing an essential role in the stimulation of oocyte maturation. The chain is Proto-oncogene serine/threonine-protein kinase mos from Rattus norvegicus (Rat).